Consider the following 87-residue polypeptide: Asparagine--tRNA ligase, cytoplasmic (87 aa).

It belongs to the class-II aminoacyl-tRNA synthetase family.

It localises to the cytoplasm. The enzyme catalyses tRNA(Asn) + L-asparagine + ATP = L-asparaginyl-tRNA(Asn) + AMP + diphosphate + H(+). This chain is Asparagine--tRNA ligase, cytoplasmic (DED81), found in Saccharomyces paradoxus (Yeast).